The following is a 93-amino-acid chain: Small ribosomal subunit protein uS19 (93 aa).

This sequence belongs to the universal ribosomal protein uS19 family.

In terms of biological role, protein S19 forms a complex with S13 that binds strongly to the 16S ribosomal RNA. The polypeptide is Small ribosomal subunit protein uS19 (Clostridium acetobutylicum (strain ATCC 824 / DSM 792 / JCM 1419 / IAM 19013 / LMG 5710 / NBRC 13948 / NRRL B-527 / VKM B-1787 / 2291 / W)).